The sequence spans 466 residues: Membrane-bound lytic murein transglycosylase F (466 aa).

The N-terminal stretch at methionine 1–threonine 24 is a signal peptide. Residues threonine 25–valine 268 are non-LT domain. Positions glycine 269–aspartate 466 are LT domain. Residue glutamate 313 is part of the active site.

It in the N-terminal section; belongs to the bacterial solute-binding protein 3 family. The protein in the C-terminal section; belongs to the transglycosylase Slt family.

It is found in the cell outer membrane. The enzyme catalyses Exolytic cleavage of the (1-&gt;4)-beta-glycosidic linkage between N-acetylmuramic acid (MurNAc) and N-acetylglucosamine (GlcNAc) residues in peptidoglycan, from either the reducing or the non-reducing ends of the peptidoglycan chains, with concomitant formation of a 1,6-anhydrobond in the MurNAc residue.. In terms of biological role, murein-degrading enzyme that degrades murein glycan strands and insoluble, high-molecular weight murein sacculi, with the concomitant formation of a 1,6-anhydromuramoyl product. Lytic transglycosylases (LTs) play an integral role in the metabolism of the peptidoglycan (PG) sacculus. Their lytic action creates space within the PG sacculus to allow for its expansion as well as for the insertion of various structures such as secretion systems and flagella. This is Membrane-bound lytic murein transglycosylase F from Sodalis glossinidius (strain morsitans).